The primary structure comprises 241 residues: 1-Cys peroxiredoxin (241 aa).

Residues 33-189 enclose the Thioredoxin domain; that stretch reads LRIGDVVPDF…IIRILDSFQL (157 aa). Cysteine 75 functions as the Cysteine sulfenic acid (-SOH) intermediate in the catalytic mechanism.

Belongs to the peroxiredoxin family. Prx6 subfamily. Homodimer.

The enzyme catalyses a hydroperoxide + [thioredoxin]-dithiol = an alcohol + [thioredoxin]-disulfide + H2O. Thiol-specific peroxidase that catalyzes the reduction of hydrogen peroxide and organic hydroperoxides to water and alcohols, respectively. Plays a role in cell protection against oxidative stress by detoxifying peroxides. The sequence is that of 1-Cys peroxiredoxin from Dictyostelium discoideum (Social amoeba).